The sequence spans 149 residues: 3-hydroxyacyl-[acyl-carrier-protein] dehydratase FabZ (149 aa).

Histidine 50 is an active-site residue.

This sequence belongs to the thioester dehydratase family. FabZ subfamily.

It localises to the cytoplasm. It catalyses the reaction a (3R)-hydroxyacyl-[ACP] = a (2E)-enoyl-[ACP] + H2O. Involved in unsaturated fatty acids biosynthesis. Catalyzes the dehydration of short chain beta-hydroxyacyl-ACPs and long chain saturated and unsaturated beta-hydroxyacyl-ACPs. The protein is 3-hydroxyacyl-[acyl-carrier-protein] dehydratase FabZ of Pediococcus pentosaceus (strain ATCC 25745 / CCUG 21536 / LMG 10740 / 183-1w).